A 307-amino-acid polypeptide reads, in one-letter code: Oxygen-dependent coproporphyrinogen-III oxidase (307 aa).

Substrate is bound at residue serine 99. 2 residues coordinate a divalent metal cation: histidine 103 and histidine 113. The active-site Proton donor is the histidine 113. Position 115 to 117 (115 to 117 (NVR)) interacts with substrate. A divalent metal cation is bound by residues histidine 152 and histidine 182. Positions 247–282 (YVEFNLVFDRGTLFGLQSGGRTESILMSMPPVANWR) are important for dimerization. Position 265–267 (265–267 (GGR)) interacts with substrate.

Belongs to the aerobic coproporphyrinogen-III oxidase family. As to quaternary structure, homodimer. The cofactor is a divalent metal cation.

The protein resides in the cytoplasm. The catalysed reaction is coproporphyrinogen III + O2 + 2 H(+) = protoporphyrinogen IX + 2 CO2 + 2 H2O. Its pathway is porphyrin-containing compound metabolism; protoporphyrin-IX biosynthesis; protoporphyrinogen-IX from coproporphyrinogen-III (O2 route): step 1/1. Its function is as follows. Involved in the heme biosynthesis. Catalyzes the aerobic oxidative decarboxylation of propionate groups of rings A and B of coproporphyrinogen-III to yield the vinyl groups in protoporphyrinogen-IX. The protein is Oxygen-dependent coproporphyrinogen-III oxidase of Burkholderia orbicola (strain MC0-3).